We begin with the raw amino-acid sequence, 496 residues long: E3 ubiquitin-protein ligase XIAP (496 aa).

BIR repeat units lie at residues 26 to 93 (EFNR…CRFI), 163 to 230 (EEAR…CFFV), and 264 to 329 (YDAR…CKYL). Zn(2+) contacts are provided by Cys-299, Cys-302, and His-319. Lys-321 is covalently cross-linked (Glycyl lysine isopeptide (Lys-Gly) (interchain with G-Cter in ubiquitin)). Cys-326 contacts Zn(2+). Lys-327 participates in a covalent cross-link: Glycyl lysine isopeptide (Lys-Gly) (interchain with G-Cter in ubiquitin). Cys-449 is modified (S-nitrosocysteine). The segment at 449-484 (CKICMDRNIAIVFVPCGHLVTCKQCAEAVDKCPMCC) adopts an RING-type zinc-finger fold.

It belongs to the IAP family. In terms of assembly, monomer, and homodimer. Interacts (via BIR3 domain) with DIABLO/SMAC; the interaction inhibits apoptotic suppressor activity. Interacts with HTRA2/PRSS25; the interaction inhibits apoptotic suppressor activity. Interacts with TAB1/MAP3K7IP1 and AIFM1. Interaction with DIABLO/SMAC hinders binding of TAB1/MAP3K7IP1 and AIFM1. Interacts with TCF25 and COMMD1. Interacts (via BIR3 domain) with SEPTIN4. Interacts with RIP1, RIP2, RIP3, RIP4, CCS and USP19. Interacts (via BIR 2 domain and BIR 3 domain) with HAX1 (via C-terminus) and this interaction blocks ubiquitination of XIAP/BIRC4. Interacts with the monomeric form of BIRC5/survivin. Interacts with TLE3 and TCF7L2/TCF4. Interacts (via BIR 3 and RING domains) with PDCL3. Post-translationally, S-Nitrosylation down-regulates its E3 ubiquitin-protein ligase activity. In terms of processing, autoubiquitinated. Ubiquitinated by TRIM32; leading to proteasomal degradation.

The protein resides in the cytoplasm. Its subcellular location is the nucleus. The catalysed reaction is S-ubiquitinyl-[E2 ubiquitin-conjugating enzyme]-L-cysteine + [acceptor protein]-L-lysine = [E2 ubiquitin-conjugating enzyme]-L-cysteine + N(6)-ubiquitinyl-[acceptor protein]-L-lysine.. Functionally, multi-functional protein which regulates not only caspases and apoptosis, but also modulates inflammatory signaling and immunity, copper homeostasis, mitogenic kinase signaling, cell proliferation, as well as cell invasion and metastasis. Acts as a direct caspase inhibitor. Directly bind to the active site pocket of CASP3 and CASP7 and obstructs substrate entry. Inactivates CASP9 by keeping it in a monomeric, inactive state. Acts as an E3 ubiquitin-protein ligase regulating NF-kappa-B signaling and the target proteins for its E3 ubiquitin-protein ligase activity include: RIPK1, RIPK2, MAP3K2/MEKK2, DIABLO/SMAC, AIFM1, CCS, PTEN and BIRC5/survivin. Acts as an important regulator of innate immunity by mediating 'Lys-63'-linked polyubiquitination of RIPK2 downstream of NOD1 and NOD2, thereby transforming RIPK2 into a scaffolding protein for downstream effectors, ultimately leading to activation of the NF-kappa-B and MAP kinases signaling. 'Lys-63'-linked polyubiquitination of RIPK2 also promotes recruitment of the LUBAC complex to RIPK2. Regulates the BMP signaling pathway and the SMAD and MAP3K7/TAK1 dependent pathways leading to NF-kappa-B and JNK activation. Ubiquitination of CCS leads to enhancement of its chaperone activity toward its physiologic target, SOD1, rather than proteasomal degradation. Ubiquitination of MAP3K2/MEKK2 and AIFM1 does not lead to proteasomal degradation. Plays a role in copper homeostasis by ubiquitinating COMMD1 and promoting its proteasomal degradation. Can also function as E3 ubiquitin-protein ligase of the NEDD8 conjugation pathway, targeting effector caspases for neddylation and inactivation. Ubiquitinates and therefore mediates the proteasomal degradation of BCL2 in response to apoptosis. Protects cells from spontaneous formation of the ripoptosome, a large multi-protein complex that has the capability to kill cancer cells in a caspase-dependent and caspase-independent manner. Suppresses ripoptosome formation by ubiquitinating RIPK1 and CASP8. Acts as a positive regulator of Wnt signaling and ubiquitinates TLE1, TLE2, TLE3, TLE4 and AES. Ubiquitination of TLE3 results in inhibition of its interaction with TCF7L2/TCF4 thereby allowing efficient recruitment and binding of the transcriptional coactivator beta-catenin to TCF7L2/TCF4 that is required to initiate a Wnt-specific transcriptional program. This chain is E3 ubiquitin-protein ligase XIAP (Xiap), found in Rattus norvegicus (Rat).